Here is a 100-residue protein sequence, read N- to C-terminus: Mitochondrial import inner membrane translocase subunit Tim10 B (100 aa).

Positions 25–49 (CFQRCVPSLHHRALDAEEEACLHSC) match the Twin CX3C motif motif. 2 disulfide bridges follow: Cys25–Cys49 and Cys29–Cys45.

The protein belongs to the small Tim family. As to quaternary structure, component of the TIM22 complex, which core is composed of TIMM22, associated with TIMM10 (TIMM10A and/or TIMM10B), TIMM9, AGK and TIMM29.

The protein localises to the mitochondrion inner membrane. Its function is as follows. Component of the TIM22 complex, a complex that mediates the import and insertion of multi-pass transmembrane proteins into the mitochondrial inner membrane. The TIM22 complex forms a twin-pore translocase that uses the membrane potential as the external driving force. In the TIM22 complex, it may act as a docking point for the soluble 70 kDa complex that guides the target proteins in transit through the aqueous mitochondrial intermembrane space. The chain is Mitochondrial import inner membrane translocase subunit Tim10 B (Timm10b) from Rattus norvegicus (Rat).